A 98-amino-acid chain; its full sequence is MSGTSPTPSNVVLVGKKPVMNYVLAALTLLNQGVPEIIIKARGRAISKAVDTVEIVRNRFLPDKIEIRAIGVGSQVVTSQDGRQSRVSTIEISIKKKA.

N6-acetyllysine is present on lysine 16.

Belongs to the histone-like Alba family. Acetylated. Acetylation at Lys-16 decreases DNA-binding affinity.

Its subcellular location is the cytoplasm. It is found in the chromosome. Binds double-stranded DNA tightly but without sequence specificity. Involved in DNA compaction. In Metallosphaera sedula (strain ATCC 51363 / DSM 5348 / JCM 9185 / NBRC 15509 / TH2), this protein is DNA/RNA-binding protein Alba.